A 430-amino-acid chain; its full sequence is Dolichyl-diphosphooligosaccharide--protein glycosyltransferase subunit WBP1 (430 aa).

Positions 1-20 (MRTDWNFFFCILLQAIFVVG) are cleaved as a signal peptide. The Lumenal segment spans residues 24 to 393 (SRTLVLYDQS…PRSWEISNSW (370 aa)). N-linked (GlcNAc...) asparagine glycosylation is found at asparagine 60 and asparagine 332. Residues 394-414 (VYISAICGVIVAWIFFVVSFV) form a helical membrane-spanning segment. The Cytoplasmic segment spans residues 415-430 (TTSSVGKKLETFKKTN).

This sequence belongs to the DDOST 48 kDa subunit family. In terms of assembly, component of the oligosaccharyltransferase (OST) complex, which appears to exist in two assemblies comprising OST1, OST2, OST4, OST5, STT3, SWP1, WPB1, and either OST3 or OST6. OST assembly occurs through the formation of 3 subcomplexes. Subcomplex 1 contains OST1 and OST5, subcomplex 2 contains STT3, OST3, and OST4, and subcomplex 3 contains OST2, WBP1, and SWP1. Interacts with SEC61, SBH1 and SSS1.

It is found in the endoplasmic reticulum membrane. The protein operates within protein modification; protein glycosylation. Subunit of the oligosaccharyl transferase (OST) complex that catalyzes the initial transfer of a defined glycan (Glc(3)Man(9)GlcNAc(2) in eukaryotes) from the lipid carrier dolichol-pyrophosphate to an asparagine residue within an Asn-X-Ser/Thr consensus motif in nascent polypeptide chains, the first step in protein N-glycosylation. N-glycosylation occurs cotranslationally and the complex associates with the Sec61 complex at the channel-forming translocon complex that mediates protein translocation across the endoplasmic reticulum (ER). All subunits are required for a maximal enzyme activity. This is Dolichyl-diphosphooligosaccharide--protein glycosyltransferase subunit WBP1 (WBP1) from Saccharomyces cerevisiae (strain ATCC 204508 / S288c) (Baker's yeast).